The following is a 363-amino-acid chain: Outer membrane porin F (363 aa).

A signal peptide spans 1–22 (MMKRKILAAVIPALLAAATANA).

It belongs to the Gram-negative porin family. In terms of assembly, homotrimer. Forms mixed heterotrimers with OmpC and with PhoE; other mixed heterotrimers with other porins are also probable.

The protein localises to the cell outer membrane. Functionally, forms pores that allow passive diffusion of small molecules across the outer membrane. The chain is Outer membrane porin F from Salmonella typhimurium (strain SL1344).